Here is a 435-residue protein sequence, read N- to C-terminus: Probable E3 ubiquitin-protein ligase makorin-1 (435 aa).

2 consecutive C3H1-type zinc fingers follow at residues 18–45 and 48–75; these read WTKH…HDLT and KPAA…HCKP. The interval 81–109 is disordered; that stretch reads LPAPQMLPLPSASLAGPSDPEPSGPTPVP. Over residues 99–108 the composition is skewed to pro residues; it reads DPEPSGPTPV. A C3H1-type 3 zinc finger spans residues 155–182; the sequence is QLRKQLCPYAAVGECRYGINCAYLHGDV. The makorin-type Cys-His stretch occupies residues 183–210; sequence CYMCGLQVLHPTDNNQRSEHTKACIEAH. Residues 228–282 form an RING-type zinc finger; the sequence is CGVCMEVVFEKANPSERRFGILSNCSHCYCLKCIRKWRSAKQFESKIIKSCPECR. The segment at 311–340 adopts a C3H1-type 4 zinc-finger fold; the sequence is GMGSKPCRYFDEGRGTCPFGSNCFYKHAFP. The disordered stretch occupies residues 345-369; the sequence is EEAQPQRRQTGSNSRNRNSRRTPLW.

In terms of tissue distribution, weakly expressed in adult brain, heart and kidney.

The enzyme catalyses S-ubiquitinyl-[E2 ubiquitin-conjugating enzyme]-L-cysteine + [acceptor protein]-L-lysine = [E2 ubiquitin-conjugating enzyme]-L-cysteine + N(6)-ubiquitinyl-[acceptor protein]-L-lysine.. It functions in the pathway protein modification; protein ubiquitination. E3 ubiquitin ligase catalyzing the covalent attachment of ubiquitin moieties onto substrate proteins. The polypeptide is Probable E3 ubiquitin-protein ligase makorin-1 (Seriola quinqueradiata (Five-ray yellowtail)).